Consider the following 1025-residue polypeptide: Interferon-induced helicase C domain-containing protein 1 (1025 aa).

2 CARD domains span residues Ala-7–Pro-97 and Ala-110–Asn-190. Residues Lys-23 and Lys-43 each participate in a glycyl lysine isopeptide (Lys-Gly) (interchain with G-Cter in ISG15) cross-link. The tract at residues Ser-273 to Gln-297 is disordered. Over residues Gly-275 to Gln-297 the composition is skewed to polar residues. Phosphoserine occurs at positions 289, 291, and 302. A Helicase ATP-binding domain is found at Ala-317–Ile-510. Phosphoserine occurs at positions 645 and 648. Positions Lys-700–Lys-872 constitute a Helicase C-terminal domain. Position 828 is a phosphoserine; by RIOK3 (Ser-828). Residues Ala-893 to Leu-1020 form the RLR CTR domain. Residues Cys-907, Cys-910, Cys-962, and Cys-964 each coordinate Zn(2+).

It belongs to the helicase family. RLR subfamily. As to quaternary structure, monomer in the absence of ligands and homodimerizes in the presence of dsRNA ligands. Can assemble into helical or linear polymeric filaments on long dsRNA. Interacts with MAVS/IPS1. Interacts (via the CARD domains) with TKFC, the interaction is inhibited by viral infection. Interacts with PCBP2. Interacts with NLRC5. Interacts with PIAS2-beta. Interacts with DDX60. Interacts with ANKRD17. Interacts with IKBKE. Interacts with ATG5 and ATG12, either as ATG5 and ATG12 monomers or as ATG12-ATG5 conjugates. Interacts with ZCCHC3; leading to activate IFIH1/MDA5. Interacts with RNF123. Interacts with DDX3X. Interacts with NOD1; this interaction promotes transcription of antiviral genes and inhibition of viral replication. Interacts with ECSIT; this interaction bridges IFIH1 to the MAVS complex at the mitochondrion. In terms of processing, during apoptosis, processed into 3 cleavage products. The helicase-containing fragment, once liberated from the CARD domains, translocate from the cytoplasm to the nucleus. The processed protein significantly sensitizes cells to DNA degradation. Sumoylated. Sumoylation positively regulates its role in type I interferon induction and is enhanced by PIAS2-beta. Post-translationally, ubiquitinated by RNF125, leading to its degradation by the proteasome. USP17/UPS17L2-dependent deubiquitination positively regulates the receptor. Ubiquitinated by TRIM25 via 'Lys-63'-linked ubiquitination, promoting activation of IFIH1/MDA5. Ubiquitinated by TRIM40 via 'Lys-48'-linked ubiquitination; leading to proteasomal degradation. Ubiquitinated by TRIM65 via 'Lys-63'-linked ubiquitination, promoting activation of IFIH1/MDA5. In terms of processing, ISGylated by ISG15. ISGylation increases upon infection with viruses. ISGylation at Lys-23 and Lys-43 is dependent of dephosphorylation, regulates mitochondrial translocation and oligomerization. Essential for IFIH1/MDA5-mediated cytokine responses and restriction of virus replication. Phosphorylated. Dephosphorylated by phsophatases PP1; dephosphorylation precedes and is required for ISGylation. Expression is prominent in lung, liver, kidney, heart and spleen (at protein level). Widely expressed at low level.

The protein localises to the cytoplasm. It localises to the nucleus. Its subcellular location is the mitochondrion. It catalyses the reaction ATP + H2O = ADP + phosphate + H(+). Innate immune receptor which acts as a cytoplasmic sensor of viral nucleic acids and plays a major role in sensing viral infection and in the activation of a cascade of antiviral responses including the induction of type I interferons and pro-inflammatory cytokines. Its ligands include mRNA lacking 2'-O-methylation at their 5' cap and long-dsRNA (&gt;1 kb in length). Upon ligand binding it associates with mitochondria antiviral signaling protein (MAVS/IPS1) which activates the IKK-related kinases: TBK1 and IKBKE which phosphorylate interferon regulatory factors: IRF3 and IRF7 which in turn activate transcription of antiviral immunological genes, including interferons (IFNs); IFN-alpha and IFN-beta. Responsible for detecting the Picornaviridae family members such as encephalomyocarditis virus (EMCV), mengo encephalomyocarditis virus (ENMG), and theiler's murine encephalomyelitis virus (TMEV). Can also detect other viruses such as dengue virus (DENV), west Nile virus (WNV), and reovirus. Also involved in antiviral signaling in response to viruses containing a dsDNA genome, such as vaccinia virus. Plays an important role in amplifying innate immune signaling through recognition of RNA metabolites that are produced during virus infection by ribonuclease L (RNase L). May play an important role in enhancing natural killer cell function and may be involved in growth inhibition and apoptosis in several tumor cell lines. The protein is Interferon-induced helicase C domain-containing protein 1 of Mus musculus (Mouse).